The following is a 456-amino-acid chain: Ribulose bisphosphate carboxylase large chain (456 aa).

Lys7 carries the N6,N6,N6-trimethyllysine modification. Residues Asn116 and Thr166 each contribute to the substrate site. Lys168 (proton acceptor) is an active-site residue. Lys170 contributes to the substrate binding site. Mg(2+)-binding residues include Lys194, Asp196, and Glu197. Residue Lys194 is modified to N6-carboxylysine. His287 acts as the Proton acceptor in catalysis. The substrate site is built by Arg288, His320, and Ser372.

It belongs to the RuBisCO large chain family. Type I subfamily. In terms of assembly, heterohexadecamer of 8 large chains and 8 small chains; disulfide-linked. The disulfide link is formed within the large subunit homodimers. The cofactor is Mg(2+). Post-translationally, the disulfide bond which can form in the large chain dimeric partners within the hexadecamer appears to be associated with oxidative stress and protein turnover.

The protein localises to the plastid. The protein resides in the chloroplast. The catalysed reaction is 2 (2R)-3-phosphoglycerate + 2 H(+) = D-ribulose 1,5-bisphosphate + CO2 + H2O. It catalyses the reaction D-ribulose 1,5-bisphosphate + O2 = 2-phosphoglycolate + (2R)-3-phosphoglycerate + 2 H(+). RuBisCO catalyzes two reactions: the carboxylation of D-ribulose 1,5-bisphosphate, the primary event in carbon dioxide fixation, as well as the oxidative fragmentation of the pentose substrate in the photorespiration process. Both reactions occur simultaneously and in competition at the same active site. The protein is Ribulose bisphosphate carboxylase large chain of Barnardia japonica (Chinese squill).